The primary structure comprises 269 residues: Type II restriction enzyme SfiI (269 aa).

The catalysed reaction is Endonucleolytic cleavage of DNA to give specific double-stranded fragments with terminal 5'-phosphates.. Functionally, an F and P subtype restriction enzyme that recognizes the double-stranded sequence 5'-GGCCN(5)GGCC-3' and cleaves before N-9. The polypeptide is Type II restriction enzyme SfiI (sfiIR) (Streptomyces fimbriatus).